Reading from the N-terminus, the 386-residue chain is Succinate--CoA ligase [ADP-forming] subunit beta (386 aa).

The ATP-grasp domain maps to 9–244 (KHILSRFGVS…YDEEIKEEIE (236 aa)). Residues Lys-46, 53–55 (GRG), Glu-99, Cys-102, and Glu-107 each bind ATP. Positions 199 and 213 each coordinate Mg(2+). Residues Asn-264 and 320–322 (GIM) contribute to the substrate site.

It belongs to the succinate/malate CoA ligase beta subunit family. As to quaternary structure, heterotetramer of two alpha and two beta subunits. Mg(2+) is required as a cofactor.

It catalyses the reaction succinate + ATP + CoA = succinyl-CoA + ADP + phosphate. It carries out the reaction GTP + succinate + CoA = succinyl-CoA + GDP + phosphate. The protein operates within carbohydrate metabolism; tricarboxylic acid cycle; succinate from succinyl-CoA (ligase route): step 1/1. Functionally, succinyl-CoA synthetase functions in the citric acid cycle (TCA), coupling the hydrolysis of succinyl-CoA to the synthesis of either ATP or GTP and thus represents the only step of substrate-level phosphorylation in the TCA. The beta subunit provides nucleotide specificity of the enzyme and binds the substrate succinate, while the binding sites for coenzyme A and phosphate are found in the alpha subunit. The chain is Succinate--CoA ligase [ADP-forming] subunit beta from Ehrlichia canis (strain Jake).